The primary structure comprises 916 residues: Isoleucine--tRNA ligase (916 aa).

The 'HIGH' region motif lies at 57-67 (PYANGNLHMGH). Glutamate 554 lines the L-isoleucyl-5'-AMP pocket. The short motif at 595–599 (KMSKS) is the 'KMSKS' region element. Residue lysine 598 coordinates ATP. 4 residues coordinate Zn(2+): cysteine 885, cysteine 888, cysteine 905, and cysteine 908.

The protein belongs to the class-I aminoacyl-tRNA synthetase family. IleS type 1 subfamily. In terms of assembly, monomer. It depends on Zn(2+) as a cofactor.

It localises to the cytoplasm. The enzyme catalyses tRNA(Ile) + L-isoleucine + ATP = L-isoleucyl-tRNA(Ile) + AMP + diphosphate. In terms of biological role, catalyzes the attachment of isoleucine to tRNA(Ile). As IleRS can inadvertently accommodate and process structurally similar amino acids such as valine, to avoid such errors it has two additional distinct tRNA(Ile)-dependent editing activities. One activity is designated as 'pretransfer' editing and involves the hydrolysis of activated Val-AMP. The other activity is designated 'posttransfer' editing and involves deacylation of mischarged Val-tRNA(Ile). The chain is Isoleucine--tRNA ligase from Staphylococcus saprophyticus subsp. saprophyticus (strain ATCC 15305 / DSM 20229 / NCIMB 8711 / NCTC 7292 / S-41).